The following is a 111-amino-acid chain: uncharacterized protein (111 aa).

It belongs to the SUI1 family.

This is an uncharacterized protein from Synechocystis sp. (strain ATCC 27184 / PCC 6803 / Kazusa).